Reading from the N-terminus, the 536-residue chain is 1,4-beta-D-glucan cellobiohydrolase B (536 aa).

Positions 1-21 (MSSFQIYRAALLLSILATANA) are cleaved as a signal peptide. The tract at residues 22–458 (QQVGTYTTET…SNIKFGPIGS (437 aa)) is catalytic. Residue E233 is the Nucleophile of the active site. The active-site Proton donor is E238. N-linked (GlcNAc...) asparagine glycans are attached at residues N351 and N414. The interval 459-500 (TYSSGSSSGSGSSSSSSSTTTKATSTTLKTTSTTSSGSSSTS) is ser/Thr-rich linker. The segment at 464 to 499 (SSSGSGSSSSSSSTTTKATSTTLKTTSTTSSGSSST) is disordered. Positions 500-536 (SAAQAYGQCGGQGWTGPTTCVSGYTCTYENAYYSQCL) constitute a CBM1 domain. 2 cysteine pairs are disulfide-bonded: C508/C525 and C519/C535.

It belongs to the glycosyl hydrolase 7 (cellulase C) family.

The protein localises to the secreted. The enzyme catalyses Hydrolysis of (1-&gt;4)-beta-D-glucosidic linkages in cellulose and cellotetraose, releasing cellobiose from the non-reducing ends of the chains.. Its function is as follows. The biological conversion of cellulose to glucose generally requires three types of hydrolytic enzymes: (1) Endoglucanases which cut internal beta-1,4-glucosidic bonds; (2) Exocellobiohydrolases that cut the disaccharide cellobiose from the non-reducing end of the cellulose polymer chain; (3) Beta-1,4-glucosidases which hydrolyze the cellobiose and other short cello-oligosaccharides to glucose. The polypeptide is 1,4-beta-D-glucan cellobiohydrolase B (cbhB) (Aspergillus niger).